A 427-amino-acid chain; its full sequence is Gamma-glutamyl phosphate reductase (427 aa).

The protein belongs to the gamma-glutamyl phosphate reductase family.

It is found in the cytoplasm. The enzyme catalyses L-glutamate 5-semialdehyde + phosphate + NADP(+) = L-glutamyl 5-phosphate + NADPH + H(+). The protein operates within amino-acid biosynthesis; L-proline biosynthesis; L-glutamate 5-semialdehyde from L-glutamate: step 2/2. In terms of biological role, catalyzes the NADPH-dependent reduction of L-glutamate 5-phosphate into L-glutamate 5-semialdehyde and phosphate. The product spontaneously undergoes cyclization to form 1-pyrroline-5-carboxylate. In Brucella anthropi (strain ATCC 49188 / DSM 6882 / CCUG 24695 / JCM 21032 / LMG 3331 / NBRC 15819 / NCTC 12168 / Alc 37) (Ochrobactrum anthropi), this protein is Gamma-glutamyl phosphate reductase.